Here is a 584-residue protein sequence, read N- to C-terminus: Aspartate--tRNA(Asp/Asn) ligase (584 aa).

Position 173 (E173) interacts with L-aspartate. An aspartate region spans residues 197–200 (QLFK). R219 contributes to the L-aspartate binding site. ATP contacts are provided by residues 219-221 (RDE) and Q228. An L-aspartate-binding site is contributed by H446. An ATP-binding site is contributed by E476. R483 is an L-aspartate binding site. An ATP-binding site is contributed by 528-531 (GLDR).

This sequence belongs to the class-II aminoacyl-tRNA synthetase family. Type 1 subfamily. Homodimer.

Its subcellular location is the cytoplasm. The catalysed reaction is tRNA(Asx) + L-aspartate + ATP = L-aspartyl-tRNA(Asx) + AMP + diphosphate. Its function is as follows. Aspartyl-tRNA synthetase with relaxed tRNA specificity since it is able to aspartylate not only its cognate tRNA(Asp) but also tRNA(Asn). Reaction proceeds in two steps: L-aspartate is first activated by ATP to form Asp-AMP and then transferred to the acceptor end of tRNA(Asp/Asn). In Sulfurovum sp. (strain NBC37-1), this protein is Aspartate--tRNA(Asp/Asn) ligase.